We begin with the raw amino-acid sequence, 96 residues long: Cytoplasmic envelopment protein 3 (96 aa).

Glycine 2 carries the N-myristoyl glycine; by host lipid modification. Residues 18–19 (LI) carry the Di-leucine-like internalization motif motif. An asp/Glu-rich (acidic) region spans residues 37–43 (DIESEEE). Residue serine 40 is modified to Phosphoserine. Residues 57–96 (RAPGRQRLRSSDPPSRHTHRRTPGGACPATQFPPPMSDSE) are disordered. Pro residues predominate over residues 87-96 (QFPPPMSDSE).

It belongs to the herpesviridae cytoplasmic envelopment protein 3 family. In terms of assembly, interacts with cytoplasmic envelopment protein 2; this interaction is essential for the proper localization of each protein to the assembly complex and thus for the production of infectious virus. Interacts with gE (via C-terminus). Interacts with gD (via C-terminus). Interacts with UL56. Post-translationally, myristoylation and palmitoylation (probably on one or more of the nearby cysteines at the N-terminus) enable membrane-binding and Golgi apparatus-specific targeting and are essential for efficient packaging. Phosphorylated. Phosphorylation does not seem to be required for recycling to the host Golgi apparatus. Packaging is selective for underphosphorylated forms.

Its subcellular location is the virion tegument. It localises to the virion membrane. It is found in the host cell membrane. The protein resides in the host Golgi apparatus membrane. Plays an important role in the cytoplasmic envelopment of tegument proteins and capsids during the assembly and egress processes. Also participates in viral entry at the fusion step probably by regulating the core fusion machinery. This is Cytoplasmic envelopment protein 3 from Human herpesvirus 1 (strain KOS) (HHV-1).